The chain runs to 1154 residues: PDZ domain-containing protein 8 (1154 aa).

Residues Gly2 to Phe24 traverse the membrane as a helical segment. Residues Asp66–Pro90 form a disordered region. Over residues Ser70–Glu85 the composition is skewed to low complexity. An SMP-LTD domain is found at Thr91 to Pro294. Residues Thr366–Val449 enclose the PDZ domain. Phosphoserine occurs at positions 496, 521, and 538. Positions Gly548–Pro612 are disordered. A Phorbol-ester/DAG-type zinc finger spans residues Lys840–Cys891. Residues Arg955 to Ile999 form a disordered region. Ser967 and Ser980 each carry phosphoserine. Residues Asn988–Gly998 are compositionally biased toward polar residues. Residues Pro1028–Glu1063 adopt a coiled-coil conformation. Polar residues predominate over residues Ser1132 to Ser1144. The segment at Ser1132 to Val1154 is disordered.

In terms of assembly, interacts with MSN. (Microbial infection) Interacts with HIV-1 Gag polyprotein p55.

It is found in the endoplasmic reticulum membrane. Its function is as follows. Molecular tethering protein that connects endoplasmic reticulum and mitochondria membranes. PDZD8-dependent endoplasmic reticulum-mitochondria membrane tethering is essential for endoplasmic reticulum-mitochondria Ca(2+) transfer. In neurons, involved in the regulation of dendritic Ca(2+) dynamics by regulating mitochondrial Ca(2+) uptake in neurons. Plays an indirect role in the regulation of cell morphology and cytoskeletal organization. May inhibit herpes simplex virus 1 infection at an early stage. The sequence is that of PDZ domain-containing protein 8 from Homo sapiens (Human).